The chain runs to 265 residues: Tryptophan synthase alpha chain (265 aa).

Active-site proton acceptor residues include Glu47 and Asp58.

Belongs to the TrpA family. In terms of assembly, tetramer of two alpha and two beta chains.

The catalysed reaction is (1S,2R)-1-C-(indol-3-yl)glycerol 3-phosphate + L-serine = D-glyceraldehyde 3-phosphate + L-tryptophan + H2O. Its pathway is amino-acid biosynthesis; L-tryptophan biosynthesis; L-tryptophan from chorismate: step 5/5. In terms of biological role, the alpha subunit is responsible for the aldol cleavage of indoleglycerol phosphate to indole and glyceraldehyde 3-phosphate. This is Tryptophan synthase alpha chain from Methanoregula boonei (strain DSM 21154 / JCM 14090 / 6A8).